We begin with the raw amino-acid sequence, 165 residues long: Probable velvet family sexual development regulator CC1G_12219 (165 aa).

The 121-residue stretch at 1 to 121 folds into the Velvet domain; sequence MSNTDAQTSF…SVWGAQVNVR (121 aa).

It belongs to the velvet family.

The protein resides in the nucleus. Functionally, velvet-domain-containing protein that probably acts as a positive regulator of sexual development. The sequence is that of Probable velvet family sexual development regulator CC1G_12219 from Coprinopsis cinerea (strain Okayama-7 / 130 / ATCC MYA-4618 / FGSC 9003) (Inky cap fungus).